The chain runs to 651 residues: MTHFPNLFSEGRIGNLVIRNRIVMPPMATNLANEDGSVSQRLIDYYVARARGGVGLIILENVQVDYPQGKNVACQLRLDDDKYMAGFFELAEAVHSYGAKIFMQIHHAGRQTTPGITEGLQPVAPSPVPCSFLGTQPRELTINEIEEIIQKFVDAAVRAKGAMFDGIELHGAHGYLIGQFMSPRTNRRVDKYGGSFERRMRFPLEIIRRIKEAVGEDYPISFRFSADEFVEGGNTLEEGKQIAKMLEEAGVHVLHVSAGIYESMPTLLEPSRFEQGWRVYLAEEIKKVVNIPVITVGVIREPEFAEKIIAEGRADFVAVGRGLIADPEWPKKAKEGRQNEIRKCISCNIGCIGGRVFQNLRLRCTVNPVAGREGVYSEIKQAPVKKKVVVVGGGPAGMQAAITAAKRGHQVILYEKKQHLGGQLEIASASPGKAKIKWFRDWLEAELSRAGVEVRSGVTADAETIAALSPDYVILATGSEPVTPRIKGAEKENTFVFQAWDVLAGKVSFDKDEEVVVIGGGLVGCETAHYLAEKGAKVTIVEMLSDIAIDMEPISRFDMMQQFTKLGISARTGKVVTEILPRGVAAVGKEGKQDFIRAHKVVLAIGQSPVGNELKKTLEDKGIDVRVIGDAYNVGKIIDAVSSGFQVAWQI.

Glutamine 104 serves as a coordination point for FMN. Tyrosine 175 (proton donor) is an active-site residue. FMN-binding positions include arginine 223 and 320-321; that span reads GR. The [4Fe-4S] cluster site is built by cysteine 344, cysteine 347, cysteine 351, and cysteine 364. FAD contacts are provided by alanine 396, glutamate 415, glutamine 423, lysine 433, and alanine 460.

This sequence in the N-terminal section; belongs to the NADH:flavin oxidoreductase/NADH oxidase family. In terms of assembly, homohexamer. The cofactor is FMN. It depends on FAD as a cofactor. [4Fe-4S] cluster is required as a cofactor. The N-terminus is blocked.

It catalyses the reaction A + NADH + H(+) = AH2 + NAD(+). Reduces a range of alternative electron acceptors. This chain is NADH oxidase, found in Thermoanaerobacter brockii (Thermoanaerobium brockii).